We begin with the raw amino-acid sequence, 85 residues long: Large ribosomal subunit protein bL27 (85 aa).

A disordered region spans residues 1-23 (MAHKKGQGSTQNNRDSAGRRLGV).

This sequence belongs to the bacterial ribosomal protein bL27 family.

The sequence is that of Large ribosomal subunit protein bL27 from Aliarcobacter butzleri (strain RM4018) (Arcobacter butzleri).